The following is a 400-amino-acid chain: Axin-like protein 1 (400 aa).

Residues 4–132 enclose the RGS domain; it reads RSKFSIDRVL…TTTADVNTTW (129 aa). 2 disordered regions span residues 190–233 and 278–306; these read QETK…TLKV and GTLERPNRLFTGTNNGFSTLQPKRRGSEA. Over residues 194–210 the composition is skewed to basic and acidic residues; the sequence is NSSETEEHAESPRKEKS. The segment covering 287–298 has biased composition (polar residues); it reads FTGTNNGFSTLQ. Positions 305-392 constitute a DIX domain; that stretch reads EAPKMTVELR…RITAICRMCP (88 aa).

As to quaternary structure, interacts with bar-1, dsh-2, gsk-3, and mig-5.

Works in parallel with pry-1 in negatively regulating bar-1 signaling in vulval precursor cells and Q neuroblasts. Shown to have a role in excretory cell development. This Caenorhabditis elegans protein is Axin-like protein 1.